The chain runs to 333 residues: MLLLPFQLLAVLFPGGNSEHAFQGPTSFHVIQTSSFTNSTWAQTQGSGWLDDLQIHGWDSDSGTAIFLKPWSKGNFSDKEVAELEEIFRVYILGFAREVQDFAGDFQMKYPFEIQGIAGCGLHSGGAIVSFLRGALGGLDFLSVKNASCVPSPEGGSRAQKVCALIMQYQGIMEIVRLLLYKTCPRYLLGVLNAGKADLQGKMKPEAWLSSGPSPGPGRLLLVCHVSGFCPKPVWVMWMPGEQEQQGTQLGDILPNANWTWYLRATLDVAAGEAAGLSCRVKHSSLEGQDIILYWSNPTSIGSIVLAIIVPSLLLLLCLALWYMRRRSYQNIP.

The first 18 residues, 1-18 (MLLLPFQLLAVLFPGGNS), serve as a signal peptide directing secretion. At 19–303 (EHAFQGPTSF…YWSNPTSIGS (285 aa)) the chain is on the extracellular side. Asn38, Asn75, and Asn146 each carry an N-linked (GlcNAc...) asparagine glycan. Intrachain disulfides connect Cys120-Cys184, Cys149-Cys163, and Cys224-Cys279. The region spanning 185–295 (PRYLLGVLNA…LEGQDIILYW (111 aa)) is the Ig-like domain. An N-linked (GlcNAc...) asparagine glycan is attached at Asn258. The helical transmembrane segment at 304 to 324 (IVLAIIVPSLLLLLCLALWYM) threads the bilayer. Over 325–333 (RRRSYQNIP) the chain is Cytoplasmic. Positions 329–332 (YQNI) match the Internalization signal motif.

Heterodimer with B2M (beta-2-microglobulin). Interacts with saposin C. As to expression, expressed in lymphocytes, spleen, lung, liver, kidney and heart.

It is found in the cell membrane. The protein resides in the endosome membrane. Its subcellular location is the lysosome membrane. Its function is as follows. Antigen-presenting protein that binds self and non-self lipid and glycolipid antigens and presents them to T-cell receptors on natural killer T-cells. This is T-cell surface glycoprotein CD1b (CD1B) from Aotus nancymaae (Ma's night monkey).